The chain runs to 433 residues: Tol-Pal system protein TolB (433 aa).

The N-terminal stretch at 1-21 (MRNLLRGMLVVICCMAGIVMA) is a signal peptide.

It belongs to the TolB family. In terms of assembly, the Tol-Pal system is composed of five core proteins: the inner membrane proteins TolA, TolQ and TolR, the periplasmic protein TolB and the outer membrane protein Pal. They form a network linking the inner and outer membranes and the peptidoglycan layer.

It localises to the periplasm. Part of the Tol-Pal system, which plays a role in outer membrane invagination during cell division and is important for maintaining outer membrane integrity. In Pseudomonas fluorescens (strain Pf0-1), this protein is Tol-Pal system protein TolB.